The primary structure comprises 95 residues: Progonadoliberin-1 (95 aa).

The first 25 residues, 1–25 (MAPQTSNLWILLLLVVVMMMSQGCC), serve as a signal peptide directing secretion. Pyrrolidone carboxylic acid is present on Gln26. Residue Gly35 is modified to Glycine amide.

Belongs to the GnRH family.

The protein resides in the secreted. Stimulates the secretion of gonadotropins. The protein is Progonadoliberin-1 (gnrh1) of Sparus aurata (Gilthead sea bream).